Here is a 293-residue protein sequence, read N- to C-terminus: ADP-forming sulfoacetate-CoA ligase subunit SauD (293 aa).

CoA is bound by residues 17-20, K43, and 96-98; these read TGKE and IAD. Catalysis depends on H251, which acts as the Tele-phosphohistidine intermediate.

The protein belongs to the succinate/malate CoA ligase alpha subunit family. In terms of assembly, forms a complex with SauC.

The catalysed reaction is sulfoacetate + ATP + CoA = sulfoacetyl-CoA + ADP + phosphate. Functionally, involved in the degradation of sulfoacetate. Catalyzes the CoA- and ATP-dependent conversion of sulfoacetate to sulfoacetyl-CoA and ADP. Cannot use other sulfonic and carboxylic acids, and shows only residual activity with 3-sulfopropanoate and malonic acid. In Bilophila wadsworthia (strain 3_1_6), this protein is ADP-forming sulfoacetate-CoA ligase subunit SauD.